The sequence spans 20 residues: Cytochrome c oxidase subunit 7B-heart, mitochondrial (20 aa).

It belongs to the cytochrome c oxidase VIIb family. In terms of assembly, component of the cytochrome c oxidase (complex IV, CIV), a multisubunit enzyme composed of 14 subunits. The complex is composed of a catalytic core of 3 subunits MT-CO1, MT-CO2 and MT-CO3, encoded in the mitochondrial DNA, and 11 supernumerary subunits COX4I, COX5A, COX5B, COX6A, COX6B, COX6C, COX7A, COX7B, COX7C, COX8 and NDUFA4, which are encoded in the nuclear genome. The complex exists as a monomer or a dimer and forms supercomplexes (SCs) in the inner mitochondrial membrane with NADH-ubiquinone oxidoreductase (complex I, CI) and ubiquinol-cytochrome c oxidoreductase (cytochrome b-c1 complex, complex III, CIII), resulting in different assemblies (supercomplex SCI(1)III(2)IV(1) and megacomplex MCI(2)III(2)IV(2)).

It is found in the mitochondrion inner membrane. The catalysed reaction is 4 Fe(II)-[cytochrome c] + O2 + 8 H(+)(in) = 4 Fe(III)-[cytochrome c] + 2 H2O + 4 H(+)(out). It functions in the pathway energy metabolism; oxidative phosphorylation. In terms of biological role, component of the cytochrome c oxidase, the last enzyme in the mitochondrial electron transport chain which drives oxidative phosphorylation. The respiratory chain contains 3 multisubunit complexes succinate dehydrogenase (complex II, CII), ubiquinol-cytochrome c oxidoreductase (cytochrome b-c1 complex, complex III, CIII) and cytochrome c oxidase (complex IV, CIV), that cooperate to transfer electrons derived from NADH and succinate to molecular oxygen, creating an electrochemical gradient over the inner membrane that drives transmembrane transport and the ATP synthase. Cytochrome c oxidase is the component of the respiratory chain that catalyzes the reduction of oxygen to water. Electrons originating from reduced cytochrome c in the intermembrane space (IMS) are transferred via the dinuclear copper A center (CU(A)) of subunit 2 and heme A of subunit 1 to the active site in subunit 1, a binuclear center (BNC) formed by heme A3 and copper B (CU(B)). The BNC reduces molecular oxygen to 2 water molecules using 4 electrons from cytochrome c in the IMS and 4 protons from the mitochondrial matrix. The sequence is that of Cytochrome c oxidase subunit 7B-heart, mitochondrial from Thunnus obesus (Bigeye tuna).